A 457-amino-acid polypeptide reads, in one-letter code: Methylenetetrahydrofolate--tRNA-(uracil-5-)-methyltransferase TrmFO (457 aa).

8-13 (GGGLAG) is an FAD binding site.

It belongs to the MnmG family. TrmFO subfamily. FAD is required as a cofactor.

The protein resides in the cytoplasm. The enzyme catalyses uridine(54) in tRNA + (6R)-5,10-methylene-5,6,7,8-tetrahydrofolate + NADH + H(+) = 5-methyluridine(54) in tRNA + (6S)-5,6,7,8-tetrahydrofolate + NAD(+). It catalyses the reaction uridine(54) in tRNA + (6R)-5,10-methylene-5,6,7,8-tetrahydrofolate + NADPH + H(+) = 5-methyluridine(54) in tRNA + (6S)-5,6,7,8-tetrahydrofolate + NADP(+). Functionally, catalyzes the folate-dependent formation of 5-methyl-uridine at position 54 (M-5-U54) in all tRNAs. The polypeptide is Methylenetetrahydrofolate--tRNA-(uracil-5-)-methyltransferase TrmFO (Thermosynechococcus vestitus (strain NIES-2133 / IAM M-273 / BP-1)).